The primary structure comprises 131 residues: Small ribosomal subunit protein eS8 (131 aa).

Residues 1-38 (MKLGAYYKGGDLKKPSGGKKRKVRRTKKKALGGGPPQI) form a disordered region. Basic residues predominate over residues 16 to 30 (SGGKKRKVRRTKKKA).

This sequence belongs to the eukaryotic ribosomal protein eS8 family. Part of the 30S ribosomal subunit.

In Pyrobaculum arsenaticum (strain DSM 13514 / JCM 11321 / PZ6), this protein is Small ribosomal subunit protein eS8.